We begin with the raw amino-acid sequence, 296 residues long: Urease operon transcriptional activator (296 aa).

Positions 171-268 (QAITHLITQE…NMTPSQFRLQ (98 aa)) constitute an HTH araC/xylS-type domain. 2 DNA-binding regions (H-T-H motif) span residues 188–209 (DDVA…NREG) and 235–258 (VFQI…KRKY).

Functionally, positive regulator of the expression of the urease operon. The protein is Urease operon transcriptional activator (ureR) of Escherichia coli.